Here is a 250-residue protein sequence, read N- to C-terminus: MTNQKQTTHFGFKSVDWNEKEKKVAEVFHSVAKNYDRMNDLMSLGIHHLWKRYTIELSHVRPGQSVLDLAGGSGDLTRLLLQKVGDSGQVILADINAAMLHVGRDRLLDEGLFKNIRYVQGNAQCLPFADNSFHCITMGFGLRNVTDKDEALQSMYRVCKPGGKLMVLEFSTPVFPGLKPVYDWYSFNILPKIGKFVANDEASYQYLAESIRMHPDQETLKAMIERVGFEDCHYHNLSGGIVALHIAYKY.

S-adenosyl-L-methionine-binding positions include Ser-73, Asp-94, and 122-123 (NA).

It belongs to the class I-like SAM-binding methyltransferase superfamily. MenG/UbiE family.

It carries out the reaction a 2-demethylmenaquinol + S-adenosyl-L-methionine = a menaquinol + S-adenosyl-L-homocysteine + H(+). It catalyses the reaction a 2-methoxy-6-(all-trans-polyprenyl)benzene-1,4-diol + S-adenosyl-L-methionine = a 5-methoxy-2-methyl-3-(all-trans-polyprenyl)benzene-1,4-diol + S-adenosyl-L-homocysteine + H(+). The protein operates within quinol/quinone metabolism; menaquinone biosynthesis; menaquinol from 1,4-dihydroxy-2-naphthoate: step 2/2. It participates in cofactor biosynthesis; ubiquinone biosynthesis. Functionally, methyltransferase required for the conversion of demethylmenaquinol (DMKH2) to menaquinol (MKH2) and the conversion of 2-polyprenyl-6-methoxy-1,4-benzoquinol (DDMQH2) to 2-polyprenyl-3-methyl-6-methoxy-1,4-benzoquinol (DMQH2). The chain is Ubiquinone/menaquinone biosynthesis C-methyltransferase UbiE from Legionella pneumophila subsp. pneumophila (strain Philadelphia 1 / ATCC 33152 / DSM 7513).